Consider the following 309-residue polypeptide: Taste receptor type 2 member 8 (309 aa).

Residues 1–7 (MFSPADN) are Extracellular-facing. The chain crosses the membrane as a helical span at residues 8 to 28 (IFIILITGEFILGILGNGYIA). At 29–50 (LVNWIDWIKKKKISTVDYILTN) the chain is on the cytoplasmic side. Residues 51-71 (LVIARICLISVMVVNGIVIVL) form a helical membrane-spanning segment. The Extracellular segment spans residues 72 to 82 (NPDVYTKNKQQ). The helical transmembrane segment at 83–103 (IVIFTFWTFANYLNMWITTCL) threads the bilayer. Residues 104 to 131 (NVFYFLKIASSSHPLFLWLKWKIDMVVH) lie on the Cytoplasmic side of the membrane. The chain crosses the membrane as a helical span at residues 132 to 152 (WILLGCFAISLLVSLIAAIVL). The Extracellular segment spans residues 153–184 (SCDYRFHAIAKHKRNITEMFHVSKXPYFEPLT). A glycan (N-linked (GlcNAc...) asparagine) is linked at asparagine 167. Residues 185–205 (LFNLFAIVPFIVSLISFFLLV) form a helical membrane-spanning segment. Residues 206-239 (RSLWRHTKQIKLYATGSRDPSTEVHVRAIKTMTS) lie on the Cytoplasmic side of the membrane. Residues 240–260 (FIFFFFLYFISSILMTFSYLM) form a helical membrane-spanning segment. Residues 261–266 (TKYKLA) lie on the Extracellular side of the membrane. A helical transmembrane segment spans residues 267–287 (VEFGEIAAILYPLGHSLILIV). At 288–309 (LNNKLRQIFVRMLTCRKIACVI) the chain is on the cytoplasmic side.

This sequence belongs to the G-protein coupled receptor T2R family.

Its subcellular location is the membrane. Functionally, receptor that may play a role in the perception of bitterness and is gustducin-linked. May play a role in sensing the chemical composition of the gastrointestinal content. The activity of this receptor may stimulate alpha gustducin, mediate PLC-beta-2 activation and lead to the gating of TRPM5. The protein is Taste receptor type 2 member 8 (TAS2R8) of Pan paniscus (Pygmy chimpanzee).